The chain runs to 182 residues: Fimbrial subunit type 1 (182 aa).

Positions 1–23 (MKIKTLAIVVLSALSLSSAAALA) are cleaved as a signal peptide. C44 and C84 form a disulfide bridge.

Belongs to the fimbrial protein family.

The protein localises to the fimbrium. The chain is Fimbrial subunit type 1 from Klebsiella pneumoniae.